Here is a 152-residue protein sequence, read N- to C-terminus: Small ribosomal subunit protein uS13 (152 aa).

It belongs to the universal ribosomal protein uS13 family.

It localises to the cytoplasm. Located at the top of the head of the 40S subunit, it contacts several helices of the 18S rRNA. The chain is Small ribosomal subunit protein uS13 (RPS18) from Argopecten irradians (Bay scallop).